A 144-amino-acid chain; its full sequence is D-aminoacyl-tRNA deacylase (144 aa).

A Gly-cisPro motif, important for rejection of L-amino acids motif is present at residues 136-137; sequence GP.

Belongs to the DTD family. Homodimer.

The protein localises to the cytoplasm. It carries out the reaction glycyl-tRNA(Ala) + H2O = tRNA(Ala) + glycine + H(+). The catalysed reaction is a D-aminoacyl-tRNA + H2O = a tRNA + a D-alpha-amino acid + H(+). An aminoacyl-tRNA editing enzyme that deacylates mischarged D-aminoacyl-tRNAs. Also deacylates mischarged glycyl-tRNA(Ala), protecting cells against glycine mischarging by AlaRS. Acts via tRNA-based rather than protein-based catalysis; rejects L-amino acids rather than detecting D-amino acids in the active site. By recycling D-aminoacyl-tRNA to D-amino acids and free tRNA molecules, this enzyme counteracts the toxicity associated with the formation of D-aminoacyl-tRNA entities in vivo and helps enforce protein L-homochirality. This chain is D-aminoacyl-tRNA deacylase, found in Actinobacillus pleuropneumoniae serotype 5b (strain L20).